We begin with the raw amino-acid sequence, 793 residues long: MMAALYPSTDLSGASSSSLPSSPSSSSPNEVMALKDVREVKEENTLNEKLFLLACDKGDYYMVKEILEENSSGDLNINCVDVLGRNAVTITIENENLDILQLLLDYGCQSADALLVAIDSEVVGAVDILLNHRPKRSSRPTIVKLMERIQNPEYSTTMDVAPVILAAHRNNYEILTMLLKQDVSLPKPHAVGCECTLCSAKNKKDSLRHSRFRLDIYRCLASPALIMLTEEDPILGAFELSADLKELSLVEVEFRNDYEELARQCKMFAKDLLAQARNSRELEVILNHTSNDEPLDKRGLLEERMNLSRLKLAIKYNQKEFVSQSNCQQFLNTVWFGQMSGYRRKPTCKKIMTVLTVGIFWPVLSLCYLIAPKSQFGRIIHTPFMKFIIHGASYFTFLLLLNLYSLVYHEDKKNTMGPALERIDYLLILWIIGMIWSDIKRLWYEGLEDFLEESRNQLSFVMNSLYLATFALKEEAHNKFHDFADRKDWDAFHPTLVAEGLFAFANVLSYLRLFFYVYTSSILGPLQISMGRMLQDFGKFLGMFLLVLFSFTIGLTQLYDKGYTPKEQKDCVGIFCEQQSNDTFHSFIGTCFALFWYIFSLAHVAILCTRFSYGEELQSFVGAFIVGTYNVVVVIVLTKLLVAMLHKSFQLIANHEDKEWKFARAKLWLSYFDDKCTLPPPFNIIPSPKTICYMISSLSKWICSHTSKGKVKRQNSLKEWRHLNEKRDENYQKVMCCLVRRYLTSMRQKMQSTDQATVENLNELRQDLSKFRNEIRDLLGFRTSKYAMFYPRN.

Residues 1–30 form a disordered region; the sequence is MMAALYPSTDLSGASSSSLPSSPSSSSPNE. The Cytoplasmic portion of the chain corresponds to 1–345; the sequence is MMAALYPSTD…FGQMSGYRRK (345 aa). A compositionally biased stretch (low complexity) spans 15 to 28; the sequence is SSSSLPSSPSSSSP. ANK repeat units follow at residues 46–75, 83–109, 111–156, and 158–180; these read LNEKLFLLACDKGDYYMVKEILEENSSGDL, LGRNAVTITIENENLDILQLLLDYGCQ, ADAL…EYST, and MDVAPVILAAHRNNYEILTMLLK. Residues histidine 189, cysteine 193, cysteine 195, and cysteine 198 each coordinate Zn(2+). Positions 346-379 form an intramembrane region, discontinuously helical; the sequence is PTCKKIMTVLTVGIFWPVLSLCYLIAPKSQFGRI. Residues 380–386 lie on the Cytoplasmic side of the membrane; sequence IHTPFMK. Residues 387-404 traverse the membrane as a helical segment; that stretch reads FIIHGASYFTFLLLLNLY. The Extracellular segment spans residues 405–422; that stretch reads SLVYHEDKKNTMGPALER. A helical transmembrane segment spans residues 423 to 439; that stretch reads IDYLLILWIIGMIWSDI. The Cytoplasmic segment spans residues 440–455; the sequence is KRLWYEGLEDFLEESR. A helical transmembrane segment spans residues 456 to 475; it reads NQLSFVMNSLYLATFALKEE. The Extracellular segment spans residues 476 to 496; that stretch reads AHNKFHDFADRKDWDAFHPTL. A helical transmembrane segment spans residues 497–517; that stretch reads VAEGLFAFANVLSYLRLFFYV. The Cytoplasmic portion of the chain corresponds to 518–536; it reads YTSSILGPLQISMGRMLQD. Residues 537-558 form a helical membrane-spanning segment; the sequence is FGKFLGMFLLVLFSFTIGLTQL. At 559 to 623 the chain is on the extracellular side; the sequence is YDKGYTPKEQ…GEELQSFVGA (65 aa). An intrachain disulfide couples cysteine 571 to cysteine 576. A helical transmembrane segment spans residues 624–644; sequence FIVGTYNVVVVIVLTKLLVAM. At 645 to 793 the chain is on the cytoplasmic side; sequence LHKSFQLIAN…SKYAMFYPRN (149 aa).

The protein belongs to the transient receptor (TC 1.A.4) family. STrpC subfamily. TRPC1 sub-subfamily. As to quaternary structure, heterotetramer with TRPC4 and/or TRPC5. Forms a heteromeric ion channel with TRPC4, with a 1:3 TRPC1:TRPC4 stoichiometry. Unlike other TRP channel proteins, does not form a homomeric channel. Interacts with TRPC4AP. Interacts with ITPR3. Interacts with MX1 and RNF24. Interacts with FKBP4. Interacts with PLSCR1. Interacts with PKD2L2. Forms a heterotetramer with PKD2 with a 2:2 stoichiometry; has distinct channel properties separate from PKD2 or TRPC1 homomers alone. In terms of processing, activation of PRKCA induces phosphorylation of TRPC1 and subsequent Ca2+ entry into cells.

The protein resides in the cell membrane. The catalysed reaction is Ca(2+)(in) = Ca(2+)(out). The enzyme catalyses Na(+)(in) = Na(+)(out). It carries out the reaction Li(+)(in) = Li(+)(out). It catalyses the reaction Cs(+)(in) = Cs(+)(out). Its activity is regulated as follows. May be operated by a phosphatidylinositol second messenger system activated by receptor tyrosine kinases or G-protein coupled receptors. Also activated by intracellular calcium store depletion. Functionally, forms a receptor-activated non-selective calcium permeant cation channel. Forms a heteromeric ion channel with TRPC4 or TRPC5 that has reduced calcium permeability compared to the homomeric TRPC4 or TRPC5 channel. Also permeable to monovalent ions including sodium, lithium and cesium ions. The chain is Short transient receptor potential channel 1 (TRPC1) from Bos taurus (Bovine).